We begin with the raw amino-acid sequence, 1025 residues long: Putative receptor-like protein kinase At3g47110 (1025 aa).

Positions 1–30 are cleaved as a signal peptide; the sequence is MGVPCIVMRLILVSALLVSVSLEHSDMVCA. Topologically, residues 31–653 are extracellular; that stretch reads QTIRLTEETD…LPRRHSSVRK (623 aa). N-linked (GlcNAc...) asparagine glycans are attached at residues Asn63 and Asn103. LRR repeat units follow at residues 104–128, 130–151, 152–175, 176–200, 202–224, 226–248, 249–271, 273–297, 298–323, and 325–344; these read LSFL…VGNL, RLQY…VLSN, CSSL…EFGS, LSKL…LGNL, SLQM…IARL, QMIF…IYNL, SSLI…DFGS, LPNL…LSNI, SSLR…RLQN, and LLLG…DLDF. N-linked (GlcNAc...) asparagine glycans are attached at residues Asn135 and Asn151. Asn188 and Asn199 each carry an N-linked (GlcNAc...) asparagine glycan. The N-linked (GlcNAc...) asparagine glycan is linked to Asn247. N-linked (GlcNAc...) asparagine glycosylation is present at Asn296. N-linked (GlcNAc...) asparagine glycosylation is found at Asn331, Asn336, Asn350, and Asn374. LRR repeat units lie at residues 351 to 374, 376 to 400, 401 to 424, 426 to 448, 449 to 472, 473 to 496, 498 to 520, 521 to 544, 546 to 567, 568 to 593, and 595 to 616; these read CSQL…FIAN, STQL…IGNL, VSLQ…LGEL, ELRK…LGNI, SGLT…LGSC, SYLL…LMEL, SLVV…IGKL, KFLL…LANC, SLEF…IRGL, TGLR…NFSK, and QNLN…VFRN. 4 N-linked (GlcNAc...) asparagine glycosylation sites follow: Asn447, Asn458, Asn486, and Asn503. N-linked (GlcNAc...) asparagine glycans are attached at residues Asn579, Asn590, Asn598, and Asn616. The helical transmembrane segment at 654–674 threads the bilayer; it reads IITICVSAVMAALLLLCLCVV. Residues 675 to 1025 are Cytoplasmic-facing; that stretch reads YLCWYKLRVK…RESFFRDEET (351 aa). Thr716 carries the phosphothreonine modification. A Protein kinase domain is found at 719 to 1020; the sequence is FSSSNLIGSG…KLVSIRESFF (302 aa). ATP-binding positions include 725–733 and Lys748; that span reads IGSGNFGAV. Residues Tyr798 and Tyr843 each carry the phosphotyrosine modification. The active-site Proton acceptor is Asp856. Phosphotyrosine is present on Tyr904.

Belongs to the protein kinase superfamily. Ser/Thr protein kinase family.

Its subcellular location is the cell membrane. The enzyme catalyses L-seryl-[protein] + ATP = O-phospho-L-seryl-[protein] + ADP + H(+). It catalyses the reaction L-threonyl-[protein] + ATP = O-phospho-L-threonyl-[protein] + ADP + H(+). The polypeptide is Putative receptor-like protein kinase At3g47110 (Arabidopsis thaliana (Mouse-ear cress)).